Reading from the N-terminus, the 446-residue chain is Protein odr-4 homolog (446 aa).

The helical transmembrane segment at 76–96 (ASQVGRMLPGGLMVLGVFLMT) threads the bilayer. Basic and acidic residues predominate over residues 394–415 (HPEKRESEPASQHLESKPENKA). The tract at residues 394-417 (HPEKRESEPASQHLESKPENKARS) is disordered. The chain crosses the membrane as a helical span at residues 426-446 (GLVISTIVASIAIIISFYYIM).

This sequence belongs to the ODR-4 family.

It is found in the membrane. In terms of biological role, may play a role in the trafficking of a subset of G-protein coupled receptors. This chain is Protein odr-4 homolog (odr4), found in Xenopus laevis (African clawed frog).